The chain runs to 323 residues: MSFFRNQLANVVEWEEFRDDMIFYKWNNREIKKGSRLIIRPGQDAVFLNNGRVEGVFQDDGDYDIESEIIPFLSTLKGFKFGFNSGMRAEVLFVNTKEFTVRWGTKQAINIPAAGMPGGMPIRANGTFNFKVQDYISLIDKIAGVKDQYFVEDIKTRIISILDQLLMKWITREGKDMFNLQANAFDIAKGIQEDLDMQLISDGMTVTGFQIMSFNYPQEVQDMITKNASYGMVGDVNRYQQISMTDGMASGKMSGSGAASDMAGMMMGMNMANQMMNQMNQNQQAQSSGPQSTGSGSKPNFCPNCGTKTGEANFCPNCGQKLV.

This is an uncharacterized protein from Bacillus subtilis (strain 168).